We begin with the raw amino-acid sequence, 105 residues long: MEYIYASLLLHAAKKEISEENIKNVLSAAGITVDEVRLKAVAAALKEVNIDEILKTATAMPVAAVAAPAGQQTQQAAEKKEEKKEEEKKGPSEEEIGGGLSSLFG.

The residue at position 1 (Met-1) is a Blocked amino end (Met). Residues 65 to 76 (VAAPAGQQTQQA) show a composition bias toward low complexity. A disordered region spans residues 65–105 (VAAPAGQQTQQAAEKKEEKKEEEKKGPSEEEIGGGLSSLFG). Residues 77 to 92 (AEKKEEKKEEEKKGPS) show a composition bias toward basic and acidic residues.

The protein belongs to the eukaryotic ribosomal protein P1/P2 family. In terms of assembly, part of the 50S ribosomal subunit. Homodimer, it forms part of the ribosomal stalk which helps the ribosome interact with GTP-bound translation factors. Forms a heptameric uL10/P0(P1)2(P1)2(P1)2 complex, where uL10/P0 forms an elongated spine to which the P1 dimers bind in a sequential fashion.

Its function is as follows. Forms part of the ribosomal stalk, playing a central role in the interaction of the ribosome with GTP-bound translation factors. This Sulfolobus acidocaldarius (strain ATCC 33909 / DSM 639 / JCM 8929 / NBRC 15157 / NCIMB 11770) protein is Large ribosomal subunit protein P1.